The following is a 1284-amino-acid chain: MMKEKSISASKASLVFFLCQMISALDVPLDSKLLEELSQPPTITQQSPKDYIVDPRENIVIQCEAKGKPPPSFSWTRNGTHFDIDKDAQVTMKPNSGTLVVNIMNGVKAEAYEGVYQCTARNERGAAISNNIVIRPSRSPLWTKEKLEPNHVREGDSLVLNCRPPVGLPPPIIFWMDNAFQRLPQSERVSQGLNGDLYFSNVQPEDTRVDYICYARFNHTQTIQQKQPISVKVFSTKPVTERPPVLLTPMGSTSNKVELRGNVLLLECIAAGLPTPVIRWIKEGGELPANRTFFENFKKTLKIIDVSEADSGNYKCTARNTLGSTHHVISVTVKAAPYWITAPRNLVLSPGEDGTLICRANGNPKPSISWLTNGVPIAIAPEDPSRKVDGDTIIFSAVQERSSAVYQCNASNEYGYLLANAFVNVLAEPPRILTPANKLYQVIADSPALIDCAYFGSPKPEIEWFRGVKGSILRGNEYVFHDNGTLEIPVAQKDSTGTYTCVARNKLGKTQNEVQLEVKDPTMIIKQPQYKVIQRSAQASFECVIKHDPTLIPTVIWLKDNNELPDDERFLVGKDNLTIMNVTDKDDGTYTCIVNTTLDSVSASAVLTVVAAPPTPAIIYARPNPPLDLELTGQLERSIELSWVPGEENNSPITNFVIEYEDGLHEPGVWHYQTEVPGSHTTVQLKLSPYVNYSFRVIAVNEIGRSQPSEPSEQYLTKSANPDENPSNVQGIGSEPDNLVITWESLKGFQSNGPGLQYKVSWRQKDVDDEWTSVVVANVSKYIVSGTPTFVPYEIKVQALNDLGYAPEPSEVIGHSGEDLPMVAPGNVQVHVINSTLAKVHWDPVPLKSVRGHLQGYKVYYWKVQSLSRRSKRHVEKKILTFRGNKTFGMLPGLEPYSSYKLNVRVVNGKGEGPASPDKVFKTPEGVPSPPSFLKITNPTLDSLTLEWGSPTHPNGVLTSYILKFQPINNTHELGPLVEIRIPANESSLILKNLNYSTRYKFYFNAQTSVGSGSQITEEAVTIMDEAGILRPAVGAGKVQPLYPRIRNVTTAAAETYANISWEYEGPDHANFYVEYGVAGSKEDWKKEIVNGSRSFFVLKGLTPGTAYKVRVGAEGLSGFRSSEDLFETGPAMASRQVDIATQGWFIGLMCAVALLILILLIVCFIRRNKGGKYPVKEKEDAHADPEIQPMKEDDGTFGEYRSLESDAEDHKPLKKGSRTPSDRTVKKEDSDDSLVDYGEGVNGQFNEDGSFIGQYSGKKEKEPAEGNESSEAPSPVNAMNSFV.

An N-terminal signal peptide occupies residues 1–24 (MMKEKSISASKASLVFFLCQMISA). Topologically, residues 25–1143 (LDVPLDSKLL…ASRQVDIATQ (1119 aa)) are extracellular. 6 Ig-like C2-type domains span residues 41–129 (PTIT…AAIS), 136–230 (PSRS…QPIS), 243–332 (PPVL…ISVT), 337–424 (PYWI…AFVN), 430–517 (PRIL…VQLE), and 521–608 (PTMI…AVLT). Disulfide bonds link cysteine 63-cysteine 118 and cysteine 162-cysteine 213. Asparagine 78 carries an N-linked (GlcNAc...) asparagine glycan. N-linked (GlcNAc...) asparagine glycans are attached at residues asparagine 218 and asparagine 290. 2 disulfides stabilise this stretch: cysteine 268–cysteine 316 and cysteine 358–cysteine 408. N-linked (GlcNAc...) asparagine glycans are attached at residues asparagine 409, asparagine 483, asparagine 576, asparagine 581, asparagine 595, and asparagine 692. Intrachain disulfides connect cysteine 452/cysteine 501 and cysteine 543/cysteine 592. 5 Fibronectin type-III domains span residues 625–720 (PPLD…TKSA), 725–819 (NPSN…SGED), 824–926 (APGN…TPEG), 930–1026 (PPSF…IMDE), and 1040–1132 (QPLY…TGPA). The segment covering 707–731 (QPSEPSEQYLTKSANPDENPSNVQG) has biased composition (polar residues). Residues 707–732 (QPSEPSEQYLTKSANPDENPSNVQGI) are disordered. N-linked (GlcNAc...) asparagine glycosylation is found at asparagine 778, asparagine 834, asparagine 885, asparagine 969, asparagine 985, asparagine 995, asparagine 1048, asparagine 1059, and asparagine 1091. The helical transmembrane segment at 1144-1166 (GWFIGLMCAVALLILILLIVCFI) threads the bilayer. Residues 1167–1284 (RRNKGGKYPV…SPVNAMNSFV (118 aa)) are Cytoplasmic-facing. Composition is skewed to basic and acidic residues over residues 1175–1195 (PVKE…KEDD), 1202–1212 (RSLESDAEDHK), and 1221–1230 (PSDRTVKKED). The disordered stretch occupies residues 1175–1284 (PVKEKEDAHA…SPVNAMNSFV (110 aa)). A compositionally biased stretch (polar residues) spans 1268-1284 (NESSEAPSPVNAMNSFV).

It belongs to the immunoglobulin superfamily. L1/neurofascin/NgCAM family. In terms of assembly, heterodimer of an alpha and a beta chain. In terms of tissue distribution, retina and developing brain.

The protein localises to the cell membrane. Its function is as follows. This protein is a cell adhesion molecule involved in neuron-neuron adhesion, neurite fasciculation, outgrowth of neurites, etc. Specifically involved in the development of optic fibres in the retina. The chain is Neuronal cell adhesion molecule from Gallus gallus (Chicken).